Reading from the N-terminus, the 146-residue chain is Cystatin-C (146 aa).

The N-terminal stretch at 1–26 is a signal peptide; sequence MAGPLRAPLLLLAILAVALAVSPAAG. Ser43 bears the Phosphoserine mark. The Secondary area of contact signature appears at 81 to 85; sequence QIVAG. Intrachain disulfides connect Cys99–Cys109 and Cys123–Cys143.

It belongs to the cystatin family.

It is found in the secreted. Functionally, as an inhibitor of cysteine proteinases, this protein is thought to serve an important physiological role as a local regulator of this enzyme activity. This is Cystatin-C (CST3) from Macaca mulatta (Rhesus macaque).